We begin with the raw amino-acid sequence, 302 residues long: Coenzyme PQQ synthesis protein B (302 aa).

Belongs to the PqqB family.

It functions in the pathway cofactor biosynthesis; pyrroloquinoline quinone biosynthesis. Functionally, may be involved in the transport of PQQ or its precursor to the periplasm. In Azotobacter vinelandii (strain DJ / ATCC BAA-1303), this protein is Coenzyme PQQ synthesis protein B.